We begin with the raw amino-acid sequence, 453 residues long: Asparagine--tRNA ligase (453 aa).

Belongs to the class-II aminoacyl-tRNA synthetase family. In terms of assembly, homodimer.

It is found in the cytoplasm. It catalyses the reaction tRNA(Asn) + L-asparagine + ATP = L-asparaginyl-tRNA(Asn) + AMP + diphosphate + H(+). This chain is Asparagine--tRNA ligase, found in Malacoplasma penetrans (strain HF-2) (Mycoplasma penetrans).